Reading from the N-terminus, the 415-residue chain is L-threonine dehydratase biosynthetic IlvA (415 aa).

At lysine 53 the chain carries N6-(pyridoxal phosphate)lysine. Pyridoxal 5'-phosphate-binding positions include asparagine 80, glycine 183 to leucine 187, and serine 308. In terms of domain architecture, ACT-like spans histidine 332 to lysine 406.

The protein belongs to the serine/threonine dehydratase family. Homotetramer. Requires pyridoxal 5'-phosphate as cofactor.

It catalyses the reaction L-threonine = 2-oxobutanoate + NH4(+). It participates in amino-acid biosynthesis; L-isoleucine biosynthesis; 2-oxobutanoate from L-threonine: step 1/1. Its function is as follows. Catalyzes the anaerobic formation of alpha-ketobutyrate and ammonia from threonine in a two-step reaction. The first step involved a dehydration of threonine and a production of enamine intermediates (aminocrotonate), which tautomerizes to its imine form (iminobutyrate). Both intermediates are unstable and short-lived. The second step is the nonenzymatic hydrolysis of the enamine/imine intermediates to form 2-ketobutyrate and free ammonia. In the low water environment of the cell, the second step is accelerated by RidA. The polypeptide is L-threonine dehydratase biosynthetic IlvA (ilvA) (Halalkalibacterium halodurans (strain ATCC BAA-125 / DSM 18197 / FERM 7344 / JCM 9153 / C-125) (Bacillus halodurans)).